The chain runs to 410 residues: Chaperone protein dnaJ 15 (410 aa).

Residues 17 to 82 (DPYEVLCVSK…EKRRHYDNAG (66 aa)) enclose the J domain. Positions 284-344 (AKTYEDTTEK…TVDELLKQRD (61 aa)) form a coiled coil. The tract at residues 351 to 410 (SVVKTPSGNNLSNGSSSKAQGDESKGDGDSAGEEGGTENRDKSKRKWFNLNLKGSDKKLG) is disordered. A compositionally biased stretch (low complexity) spans 357 to 367 (SGNNLSNGSSS).

Belongs to the DnaJ family. B/II subfamily. As to expression, expressed at high levels in root cap, root tip meristematic region and elongation zones, and at lower levels in mature part of roots (at protein level). Constitutively expressed in seedlings, etiolated or not, roots, rosette leaves, cauline leaves, stems, flowers, siliques and pollen.

It localises to the cytoplasm. The protein resides in the cytoskeleton. The protein localises to the endoplasmic reticulum membrane. It is found in the golgi apparatus membrane. In terms of biological role, plays a continuous role in plant development probably in the structural organization of compartments. Seems to be involved in early gravitropic signal transduction within the gravity-perceiving cells (statocytes), where it influences pH changes and auxin distribution. Probably affects the localization and/or activity of auxin efflux carrier components (PIN proteins) or other proteins involved in lateral auxin transport. The polypeptide is Chaperone protein dnaJ 15 (ATJ15) (Arabidopsis thaliana (Mouse-ear cress)).